Here is a 520-residue protein sequence, read N- to C-terminus: Bifunctional purine biosynthesis protein PurH (520 aa).

The region spanning 1–147 (MAKIGRALIS…KNNRDVTVVV (147 aa)) is the MGS-like domain.

Belongs to the PurH family.

It carries out the reaction (6R)-10-formyltetrahydrofolate + 5-amino-1-(5-phospho-beta-D-ribosyl)imidazole-4-carboxamide = 5-formamido-1-(5-phospho-D-ribosyl)imidazole-4-carboxamide + (6S)-5,6,7,8-tetrahydrofolate. It catalyses the reaction IMP + H2O = 5-formamido-1-(5-phospho-D-ribosyl)imidazole-4-carboxamide. It functions in the pathway purine metabolism; IMP biosynthesis via de novo pathway; 5-formamido-1-(5-phospho-D-ribosyl)imidazole-4-carboxamide from 5-amino-1-(5-phospho-D-ribosyl)imidazole-4-carboxamide (10-formyl THF route): step 1/1. Its pathway is purine metabolism; IMP biosynthesis via de novo pathway; IMP from 5-formamido-1-(5-phospho-D-ribosyl)imidazole-4-carboxamide: step 1/1. The polypeptide is Bifunctional purine biosynthesis protein PurH (Geobacter sp. (strain M21)).